Reading from the N-terminus, the 486-residue chain is Katanin p60 ATPase-containing subunit A1 (486 aa).

The disordered stretch occupies residues 103-174 (RSSPLPVRRP…NKAEVSEKEV (72 aa)). Positions 143-174 (NGDRAKPLKGKEKKEAKPKDDKNKAEVSEKEV) are enriched in basic and acidic residues. ATP is bound at residue 244–251 (GPPGTGKT).

The protein belongs to the AAA ATPase family. Katanin p60 subunit A1 subfamily. In terms of assembly, can homooligomerize into hexameric rings, which may be promoted by interaction with microtubules. Interacts with katnb1, which may serve as a targeting subunit.

It localises to the cytoplasm. Its subcellular location is the cytoskeleton. It is found in the microtubule organizing center. The protein localises to the centrosome. The protein resides in the spindle pole. It localises to the spindle. The catalysed reaction is n ATP + n H2O + a microtubule = n ADP + n phosphate + (n+1) alpha/beta tubulin heterodimers.. With respect to regulation, ATPase activity is stimulated by microtubules, which promote homooligomerization. ATP-dependent microtubule severing is stimulated by interaction with katnb1. Functionally, catalytic subunit of a complex which severs microtubules in an ATP-dependent manner. Microtubule severing may promote rapid reorganization of cellular microtubule arrays and the release of microtubules from the centrosome following nucleation. This is Katanin p60 ATPase-containing subunit A1 (katna1) from Salmo salar (Atlantic salmon).